We begin with the raw amino-acid sequence, 503 residues long: Aspartyl/glutamyl-tRNA(Asn/Gln) amidotransferase subunit B (503 aa).

The protein belongs to the GatB/GatE family. GatB subfamily. Heterotrimer of A, B and C subunits.

The enzyme catalyses L-glutamyl-tRNA(Gln) + L-glutamine + ATP + H2O = L-glutaminyl-tRNA(Gln) + L-glutamate + ADP + phosphate + H(+). The catalysed reaction is L-aspartyl-tRNA(Asn) + L-glutamine + ATP + H2O = L-asparaginyl-tRNA(Asn) + L-glutamate + ADP + phosphate + 2 H(+). Functionally, allows the formation of correctly charged Asn-tRNA(Asn) or Gln-tRNA(Gln) through the transamidation of misacylated Asp-tRNA(Asn) or Glu-tRNA(Gln) in organisms which lack either or both of asparaginyl-tRNA or glutaminyl-tRNA synthetases. The reaction takes place in the presence of glutamine and ATP through an activated phospho-Asp-tRNA(Asn) or phospho-Glu-tRNA(Gln). This Jannaschia sp. (strain CCS1) protein is Aspartyl/glutamyl-tRNA(Asn/Gln) amidotransferase subunit B.